A 200-amino-acid polypeptide reads, in one-letter code: Snake venom metalloproteinase hemorrhagic factor 2 (200 aa).

Positions 4–200 (KYIELVVVAD…RKPQCILNKP (197 aa)) constitute a Peptidase M12B domain. E7 is a Ca(2+) binding site. Residue N70 is glycosylated (N-linked (GlcNAc...) asparagine). D91 contributes to the Ca(2+) binding site. Cystine bridges form between C115–C195, C155–C179, and C157–C162. H140 serves as a coordination point for Zn(2+). Residue E141 is part of the active site. Residues H144 and H150 each contribute to the Zn(2+) site. The Ca(2+) site is built by C195 and N198.

The protein belongs to the venom metalloproteinase (M12B) family. P-I subfamily. In terms of assembly, monomer. Requires Zn(2+) as cofactor. As to expression, expressed by the venom gland.

It localises to the secreted. Snake venom zinc metalloproteinase that induces weak hemorrhage and mild myonecrosis. Shows mild myotoxicity by killing myocytes. Also induces edema in the mouse footpad at doses where hemorrhage is absent. In vitro, degrades laminin, fibronectin, and type IV collagen, suggesting this toxin play a role in local tissue damage by degrading extracellular matrix, and possibly by degrading muscle extracellular matrix. Hemorrhage is not due to cytotoxicity towards endothelial cells in culture, and may only play a minor role in local bleeding characteristic of L.muta envenomations. Also induces the synthesis of several endogenous matrix metalloproteinases, which in turn, may participate in extracellular matrix degradation. The protein is Snake venom metalloproteinase hemorrhagic factor 2 of Lachesis muta muta (Bushmaster).